A 677-amino-acid polypeptide reads, in one-letter code: Beta-galactosidase (677 aa).

Residues 1 to 23 (MPGFLVRILPLLLALLLLGPTRG) form the signal peptide. Positions 24–28 (LRNAT) are excised as a propeptide. A glycan (N-linked (GlcNAc...) asparagine) is linked at asparagine 26. Positions 83, 129, and 187 each coordinate substrate. Catalysis depends on glutamate 188, which acts as the Proton donor. Residues cysteine 195 and cysteine 230 are joined by a disulfide bond. N-linked (GlcNAc...) asparagine glycosylation is present at asparagine 247. Glutamate 268 acts as the Nucleophile in catalysis. Substrate is bound at residue tyrosine 333. N-linked (GlcNAc...) asparagine glycans are attached at residues asparagine 464, asparagine 498, asparagine 545, and asparagine 555. The cysteines at positions 626 and 634 are disulfide-linked. The disordered stretch occupies residues 654–677 (SKPVEKKLMPSPPQKNKDSWLDHV). Residues 668 to 677 (KNKDSWLDHV) are compositionally biased toward basic and acidic residues.

Belongs to the glycosyl hydrolase 35 family. In terms of assembly, homodimer. May form higher multimers.

Its subcellular location is the lysosome. It catalyses the reaction Hydrolysis of terminal non-reducing beta-D-galactose residues in beta-D-galactosides.. In terms of biological role, cleaves beta-linked terminal galactosyl residues from gangliosides, glycoproteins, and glycosaminoglycans. The protein is Beta-galactosidase (GLB1) of Pongo abelii (Sumatran orangutan).